Reading from the N-terminus, the 294-residue chain is Nucleotide-binding protein A2cp1_0165 (294 aa).

An ATP-binding site is contributed by 17 to 24 (GVSGSGKS). Residue 68–71 (DARE) coordinates GTP.

The protein belongs to the RapZ-like family.

Displays ATPase and GTPase activities. In Anaeromyxobacter dehalogenans (strain 2CP-1 / ATCC BAA-258), this protein is Nucleotide-binding protein A2cp1_0165.